The following is a 484-amino-acid chain: UDP-N-acetylmuramoyl-L-alanyl-D-glutamate--2,6-diaminopimelate ligase (484 aa).

110 to 116 is a binding site for ATP; the sequence is GTNGKTT. UDP-N-acetyl-alpha-D-muramoyl-L-alanyl-D-glutamate contacts are provided by residues 152–153, Ser-179, and Arg-187; that span reads TT. At Lys-219 the chain carries N6-carboxylysine. Residues Arg-381, 405 to 408, Gly-455, and Glu-459 contribute to the meso-2,6-diaminopimelate site; that span reads DNPR. The short motif at 405 to 408 is the Meso-diaminopimelate recognition motif element; the sequence is DNPR.

Belongs to the MurCDEF family. MurE subfamily. Mg(2+) is required as a cofactor. Carboxylation is probably crucial for Mg(2+) binding and, consequently, for the gamma-phosphate positioning of ATP.

The protein localises to the cytoplasm. The enzyme catalyses UDP-N-acetyl-alpha-D-muramoyl-L-alanyl-D-glutamate + meso-2,6-diaminopimelate + ATP = UDP-N-acetyl-alpha-D-muramoyl-L-alanyl-gamma-D-glutamyl-meso-2,6-diaminopimelate + ADP + phosphate + H(+). It participates in cell wall biogenesis; peptidoglycan biosynthesis. In terms of biological role, catalyzes the addition of meso-diaminopimelic acid to the nucleotide precursor UDP-N-acetylmuramoyl-L-alanyl-D-glutamate (UMAG) in the biosynthesis of bacterial cell-wall peptidoglycan. This chain is UDP-N-acetylmuramoyl-L-alanyl-D-glutamate--2,6-diaminopimelate ligase, found in Clostridium perfringens (strain 13 / Type A).